The chain runs to 92 residues: Small ribosomal subunit protein uS19 (92 aa).

The segment at 72-92 (GEFSPTRSFRGHAGAKNKGKK) is disordered. Residues 80 to 92 (FRGHAGAKNKGKK) show a composition bias toward basic residues.

It belongs to the universal ribosomal protein uS19 family.

Protein S19 forms a complex with S13 that binds strongly to the 16S ribosomal RNA. The polypeptide is Small ribosomal subunit protein uS19 (Flavobacterium johnsoniae (strain ATCC 17061 / DSM 2064 / JCM 8514 / BCRC 14874 / CCUG 350202 / NBRC 14942 / NCIMB 11054 / UW101) (Cytophaga johnsonae)).